Reading from the N-terminus, the 668-residue chain is NADH-ubiquinone oxidoreductase chain 5 (668 aa).

The next 18 helical transmembrane spans lie at 1-21 (MYIINLILPLIGSIITGLFGH), 31-51 (IAVGCMMLTALSSLYIGYEIL), 81-101 (LTSIMIIVITCISSMVHLYSM), 111-131 (TRFFSYLSLFTFFMMLLVTAD), 133-153 (FVQLFFGWEGVGIMSYLLINF), 178-198 (LFFGILLVFLVFKSVDFSVIF), 211-231 (LLGYEVNAITLIGSFIVIGVV), 251-271 (TPVSALLHAATMVTAGVFLVL), 283-303 (ILNILTIIGALTTLFATTIGI), 311-331 (VIAYSTCSQLGYMIFACGLLN), 339-359 (LTTHAFFKALLFLSAGSVIHG), 375-395 (LMPLTYQCMLIGTLALTGFPF), 421-441 (AIIGYVAAFGTTFYSFRLLIL), 462-482 (TNMVIPLVILAICSIFIGYLT), 519-539 (LLPLFAFIYGVLTPVLFYFNL), 566-586 (FDFLSRVLIAVPFFHLSYDVM), 629-649 (IVQAILLIIFVGIFSFMIGFL), and 650-668 (YVELFVILGALYLCLPKIK).

The protein belongs to the complex I subunit 5 family.

The protein resides in the mitochondrion inner membrane. The catalysed reaction is a ubiquinone + NADH + 5 H(+)(in) = a ubiquinol + NAD(+) + 4 H(+)(out). Core subunit of the mitochondrial membrane respiratory chain NADH dehydrogenase (Complex I) that is believed to belong to the minimal assembly required for catalysis. Complex I functions in the transfer of electrons from NADH to the respiratory chain. The immediate electron acceptor for the enzyme is believed to be ubiquinone. The sequence is that of NADH-ubiquinone oxidoreductase chain 5 (nad5) from Dictyostelium citrinum (Slime mold).